The sequence spans 212 residues: Cytidylate kinase (212 aa).

7–15 (GPAASGKGT) serves as a coordination point for ATP.

It belongs to the cytidylate kinase family. Type 1 subfamily.

Its subcellular location is the cytoplasm. It carries out the reaction CMP + ATP = CDP + ADP. The enzyme catalyses dCMP + ATP = dCDP + ADP. The chain is Cytidylate kinase from Rhodopseudomonas palustris (strain TIE-1).